Consider the following 46-residue polypeptide: Elongation factor Tu (46 aa).

A compositionally biased stretch (basic and acidic residues) spans 1-10 (MAKGKFERSK). The segment at 1-20 (MAKGKFERSKPHVNVGTIGH) is disordered. 19–26 (GHVDHGKT) contacts GTP.

Belongs to the GTP-binding elongation factor family. EF-Tu/EF-1A subfamily. In terms of assembly, monomer.

It localises to the cytoplasm. Its function is as follows. This protein promotes the GTP-dependent binding of aminoacyl-tRNA to the A-site of ribosomes during protein biosynthesis. This is Elongation factor Tu (tufA) from Eikenella corrodens.